The following is a 240-amino-acid chain: Dihydromonapterin reductase (240 aa).

The active-site Proton acceptor is the Tyr-152.

Belongs to the short-chain dehydrogenases/reductases (SDR) family. FolM subfamily.

It carries out the reaction (6S)-5,6,7,8-tetrahydrofolate + NADP(+) = 7,8-dihydrofolate + NADPH + H(+). The enzyme catalyses 7,8-dihydromonapterin + NADPH + H(+) = 5,6,7,8-tetrahydromonapterin + NADP(+). In terms of biological role, catalyzes the reduction of dihydromonapterin to tetrahydromonapterin. Also has lower activity with dihydrofolate. The sequence is that of Dihydromonapterin reductase (folM) from Escherichia coli O1:K1 / APEC.